A 91-amino-acid chain; its full sequence is UPF0250 protein mma_3250 (91 aa).

It belongs to the UPF0250 family.

The sequence is that of UPF0250 protein mma_3250 from Janthinobacterium sp. (strain Marseille) (Minibacterium massiliensis).